The primary structure comprises 25 residues: C-type natriuretic peptide (25 aa).

The cysteines at positions 9 and 25 are disulfide-linked.

In terms of tissue distribution, venom gland.

It is found in the secreted. Snake venom natriuretic peptide that has a vasorelaxant activity in rat aortic strips and a diuretic potency in anesthetized rats. May act by activating natriuretic receptors (NPR1 and/or NPR2). The polypeptide is C-type natriuretic peptide (Crotalus atrox (Western diamondback rattlesnake)).